Here is a 427-residue protein sequence, read N- to C-terminus: Light-independent protochlorophyllide reductase subunit N (427 aa).

3 residues coordinate [4Fe-4S] cluster: Cys29, Cys54, and Cys115.

The protein belongs to the BchN/ChlN family. In terms of assembly, protochlorophyllide reductase is composed of three subunits; BchL, BchN and BchB. Forms a heterotetramer of two BchB and two BchN subunits. [4Fe-4S] cluster is required as a cofactor.

It carries out the reaction chlorophyllide a + oxidized 2[4Fe-4S]-[ferredoxin] + 2 ADP + 2 phosphate = protochlorophyllide a + reduced 2[4Fe-4S]-[ferredoxin] + 2 ATP + 2 H2O. It participates in porphyrin-containing compound metabolism; bacteriochlorophyll biosynthesis (light-independent). Functionally, component of the dark-operative protochlorophyllide reductase (DPOR) that uses Mg-ATP and reduced ferredoxin to reduce ring D of protochlorophyllide (Pchlide) to form chlorophyllide a (Chlide). This reaction is light-independent. The NB-protein (BchN-BchB) is the catalytic component of the complex. The polypeptide is Light-independent protochlorophyllide reductase subunit N (Bradyrhizobium sp. (strain ORS 278)).